A 258-amino-acid polypeptide reads, in one-letter code: TLC domain-containing protein 4-A (258 aa).

6 consecutive transmembrane segments (helical) span residues 5-25 (LISY…FSAI), 52-72 (FVST…LAYD), 85-105 (FWVK…LLLL), 116-132 (YMVC…GYVL), 171-191 (PVLL…IAVI), and 212-232 (IGPQ…NVFW). A TLC domain is found at 43–245 (GKQCEWDSRF…IARGFYKVVK (203 aa)).

It belongs to the TLCD4 family.

It localises to the membrane. The polypeptide is TLC domain-containing protein 4-A (tlcd4-a) (Xenopus laevis (African clawed frog)).